The following is a 175-amino-acid chain: ATP synthase subunit b (175 aa).

A helical transmembrane segment spans residues 18 to 38 (VTSWEPFVANLIAFILMVVIL).

The protein belongs to the ATPase B chain family. As to quaternary structure, F-type ATPases have 2 components, F(1) - the catalytic core - and F(0) - the membrane proton channel. F(1) has five subunits: alpha(3), beta(3), gamma(1), delta(1), epsilon(1). F(0) has three main subunits: a(1), b(2) and c(10-14). The alpha and beta chains form an alternating ring which encloses part of the gamma chain. F(1) is attached to F(0) by a central stalk formed by the gamma and epsilon chains, while a peripheral stalk is formed by the delta and b chains.

It is found in the cell inner membrane. Its function is as follows. F(1)F(0) ATP synthase produces ATP from ADP in the presence of a proton or sodium gradient. F-type ATPases consist of two structural domains, F(1) containing the extramembraneous catalytic core and F(0) containing the membrane proton channel, linked together by a central stalk and a peripheral stalk. During catalysis, ATP synthesis in the catalytic domain of F(1) is coupled via a rotary mechanism of the central stalk subunits to proton translocation. Component of the F(0) channel, it forms part of the peripheral stalk, linking F(1) to F(0). This is ATP synthase subunit b from Akkermansia muciniphila (strain ATCC BAA-835 / DSM 22959 / JCM 33894 / BCRC 81048 / CCUG 64013 / CIP 107961 / Muc).